Consider the following 1216-residue polypeptide: DNA polymerase subunit gamma-1 (1216 aa).

Positions 27–37 (SSSVLDPVPSD) are enriched in low complexity. Residues 27–50 (SSSVLDPVPSDGQPQSQMPSSENG) form a disordered region. The segment covering 38 to 50 (GQPQSQMPSSENG) has biased composition (polar residues). Positions 179–183 (VFDVE) match the Exo I motif. The Exonuclease activity role is filled by Asp-181. Positions 250–258 (VGHNVSFDR) match the Exo II motif. Ser-289 serves as a coordination point for DNA. Residues 301 to 314 (GKHKTQHPTKRGQK) show a composition bias toward basic residues. A disordered region spans residues 301 to 321 (GKHKTQHPTKRGQKSQKNANG). An Exo III motif is present at residues 377-385 (YCARDVWAT). The segment at 488–518 (TASASKLPIEGAGPFGDPMDQEDPGPPSEEE) is disordered. The accessory-interacting determinant stretch occupies residues 491-552 (ASKLPIEGAG…RPQHLPGHPG (62 aa)). The segment covering 506-518 (MDQEDPGPPSEEE) has biased composition (acidic residues). Arg-560 is an RNA binding site. Ser-574 lines the DNA pocket. Positions 731, 740, and 745 each coordinate RNA. DNA is bound by residues Lys-783 and Thr-826. The segment at 835–841 (TWLTASN) is trigger loop. The RNA site is built by Ser-840 and Arg-846. The short motif at 864 to 873 (VGADVDSQEL) is the Pol A element. A 2'-deoxyribonucleoside 5'-triphosphate contacts are provided by Asp-867, Val-868, Ser-870, Glu-872, Arg-920, Lys-924, and Tyr-928. Residues Asp-867 and Val-868 each coordinate Mg(2+). Residues 920 to 935 (REHAKVFNYGRIYGAG) carry the Pol B motif. Residues Thr-1071 and Ser-1072 each coordinate DNA. Residues 1111-1118 (HDEVRYLV) carry the Pol C motif. Position 1112 (Asp-1112) interacts with a 2'-deoxyribonucleoside 5'-triphosphate. Residue Asp-1112 participates in Mg(2+) binding.

Belongs to the DNA polymerase type-A family. Heterotrimer composed of a catalytic subunit and a homodimer of accessory subunits (POLG:POLG2). Interacts with TTC3. Interacts with LIG3. Mg(2+) is required as a cofactor.

The protein localises to the mitochondrion. It localises to the mitochondrion matrix. Its subcellular location is the mitochondrion nucleoid. It carries out the reaction DNA(n) + a 2'-deoxyribonucleoside 5'-triphosphate = DNA(n+1) + diphosphate. The enzyme catalyses a 3'-end 2'-deoxyribonucleotidyl-deoxyribonucleotide-DNA + H2O = a 3'-end 2'-deoxyribonucleotide-DNA + a 2'-deoxyribonucleoside 5'-phosphate + H(+). The catalysed reaction is a 5'-end 2'-deoxyribose-2'-deoxyribonucleotide-DNA = (2E,4S)-4-hydroxypenten-2-al-5-phosphate + a 5'-end 5'-phospho-2'-deoxyribonucleoside-DNA + H(+). Inhibited by dideoxynucleotides such as antiviral agent zalcitabine. In terms of biological role, catalytic subunit of DNA polymerase gamma solely responsible for replication of mitochondrial DNA (mtDNA). Replicates both heavy and light strands of the circular mtDNA genome using a single-stranded DNA template, RNA primers and the four deoxyribonucleoside triphosphates as substrates. Has 5' -&gt; 3' polymerase activity. Functionally interacts with TWNK and SSBP1 at the replication fork to form a highly processive replisome, where TWNK unwinds the double-stranded DNA template prior to replication and SSBP1 covers the parental heavy strand to enable continuous replication of the entire mitochondrial genome. A single nucleotide incorporation cycle includes binding of the incoming nucleotide at the insertion site, a phosphodiester bond formation reaction that extends the 3'-end of the primer DNA, and translocation of the primer terminus to the post-insertion site. After completing replication of a mtDNA strand, mediates 3' -&gt; 5' exonucleolytic degradation at the nick to enable proper ligation. Highly accurate due to high nucleotide selectivity and 3' -&gt; 5' exonucleolytic proofreading. Proficiently corrects base substitutions, single-base additions and deletions in non-repetitive sequences and short repeats, but displays lower proofreading activity when replicating longer homopolymeric stretches. Exerts exonuclease activity toward single-stranded DNA and double-stranded DNA containing 3'-terminal mispairs. When a misincorporation occurs, transitions from replication to a pro-nucleolytic editing mode and removes the missincorporated nucleoside in the exonuclease active site. Proceeds via an SN2 nucleolytic mechanism in which Asp-198 catalyzes phosphodiester bond hydrolysis and Glu-200 stabilizes the leaving group. As a result the primer strand becomes one nucleotide shorter and is positioned in the post-insertion site, ready to resume DNA synthesis. Exerts 5'-deoxyribose phosphate (dRP) lyase activity and mediates repair-associated mtDNA synthesis (gap filling) in base-excision repair pathway. Catalyzes the release of the 5'-terminal 2-deoxyribose-5-phosphate sugar moiety from incised apurinic/apyrimidinic (AP) sites to produce a substrate for DNA ligase. The dRP lyase reaction does not require divalent metal ions and likely proceeds via a Schiff base intermediate in a beta-elimination reaction mechanism. The protein is DNA polymerase subunit gamma-1 of Rattus norvegicus (Rat).